Here is a 501-residue protein sequence, read N- to C-terminus: CaM kinase-like vesicle-associated protein (501 aa).

The region spanning 24–286 (YDLGQVIKTE…AEEAISHEWI (263 aa)) is the Protein kinase domain. The segment at 327–501 (RAPEQSSTAA…AQESQREEAS (175 aa)) is disordered. Positions 331–365 (QSSTAAAQSASATDTATPGAAGGATAAAASGATSA) are enriched in low complexity. The span at 387-428 (TPATDGSATPATDGSVTPATDGSITPATDGSVTPATDRSATP) shows a compositional bias: polar residues. Residue Thr-435 is modified to Phosphothreonine. The segment covering 438 to 451 (TEESTVPTTQSSAM) has biased composition (polar residues). Thr-459 carries the phosphothreonine modification.

This sequence belongs to the protein kinase superfamily. CAMK Ser/Thr protein kinase family. As to quaternary structure, interacts with calmodulin, in the presence of calcium. It depends on Ca(2+) as a cofactor.

The protein localises to the cell membrane. It is found in the cytoplasmic vesicle membrane. In terms of biological role, does not appear to have detectable kinase activity. This is CaM kinase-like vesicle-associated protein (CAMKV) from Homo sapiens (Human).